The primary structure comprises 299 residues: MHVVILGSAAGGGVPQWNCRCSICSLAWAGDSRVRPRTQSSIAVSPDGERWLLLNASPDIRQQIQANPQMHPREGLRHSPIHAVLLTNGDVDHVAGLLTLREGQPFTLYATPGILASVSDNRVFDVMAADVVKRQTIALNETFEPVPGLSVTLFSVPGKVPLWLEDASMEIGAETETTVGTMIEAGGKRLAYIPGCARVTEDLKARIAGADALLFDGTVLEDDDMIRAGVGTKTGWRMGHIQMNGETGSIASLADIEIGRRVFVHINNTNPVLIEDSYERASVEARGWTVAHDGLTLDL.

It belongs to the PqqB family.

The protein operates within cofactor biosynthesis; pyrroloquinoline quinone biosynthesis. In terms of biological role, may be involved in the transport of PQQ or its precursor to the periplasm. The protein is Coenzyme PQQ synthesis protein B of Methylorubrum extorquens (strain ATCC 14718 / DSM 1338 / JCM 2805 / NCIMB 9133 / AM1) (Methylobacterium extorquens).